The following is a 329-amino-acid chain: 4-diphosphocytidyl-2-C-methyl-D-erythritol kinase (329 aa).

Residue K14 is part of the active site. ATP is bound at residue 117-127; the sequence is PSGAGMGGASS. D166 is an active-site residue.

Belongs to the GHMP kinase family. IspE subfamily.

The enzyme catalyses 4-CDP-2-C-methyl-D-erythritol + ATP = 4-CDP-2-C-methyl-D-erythritol 2-phosphate + ADP + H(+). Its pathway is isoprenoid biosynthesis; isopentenyl diphosphate biosynthesis via DXP pathway; isopentenyl diphosphate from 1-deoxy-D-xylulose 5-phosphate: step 3/6. Functionally, catalyzes the phosphorylation of the position 2 hydroxy group of 4-diphosphocytidyl-2C-methyl-D-erythritol. This is 4-diphosphocytidyl-2-C-methyl-D-erythritol kinase from Rhodopirellula baltica (strain DSM 10527 / NCIMB 13988 / SH1).